Consider the following 215-residue polypeptide: Glycerol-3-phosphate acyltransferase (215 aa).

5 consecutive transmembrane segments (helical) span residues 1–21 (MAFLISALLILIGYLLGSIPT), 57–77 (IFVLTVDLAKAMLAVILVKLW), 85–105 (MIPLEWKSWLVVFAAIAAVLG), 126–146 (VLLVLNPIVALGTLGSFLAML), and 165–185 (VLMFGLHQPLPYCLFGVIVGL).

The protein belongs to the PlsY family. As to quaternary structure, probably interacts with PlsX.

It is found in the cell inner membrane. It carries out the reaction an acyl phosphate + sn-glycerol 3-phosphate = a 1-acyl-sn-glycero-3-phosphate + phosphate. Its pathway is lipid metabolism; phospholipid metabolism. In terms of biological role, catalyzes the transfer of an acyl group from acyl-phosphate (acyl-PO(4)) to glycerol-3-phosphate (G3P) to form lysophosphatidic acid (LPA). This enzyme utilizes acyl-phosphate as fatty acyl donor, but not acyl-CoA or acyl-ACP. The chain is Glycerol-3-phosphate acyltransferase from Crocosphaera subtropica (strain ATCC 51142 / BH68) (Cyanothece sp. (strain ATCC 51142)).